A 172-amino-acid polypeptide reads, in one-letter code: Small ribosomal subunit protein uS5 (172 aa).

The S5 DRBM domain occupies 17-80; it reads LREKMIAVNR…DEARRKMVKV (64 aa).

It belongs to the universal ribosomal protein uS5 family. As to quaternary structure, part of the 30S ribosomal subunit. Contacts proteins S4 and S8.

Functionally, with S4 and S12 plays an important role in translational accuracy. Its function is as follows. Located at the back of the 30S subunit body where it stabilizes the conformation of the head with respect to the body. This is Small ribosomal subunit protein uS5 from Ralstonia nicotianae (strain ATCC BAA-1114 / GMI1000) (Ralstonia solanacearum).